Reading from the N-terminus, the 266-residue chain is Non-structural maintenance of chromosomes element 1 homolog (266 aa).

An interaction with NSMCE3 region spans residues 1-102 (MQGSTRRMGV…SISKMATDFA (102 aa)). Residues 191-232 (CNICHSLLIQGQSCETCGIRMHLPCVAKYFQSNAEPRCPHCN) form an RING-type; atypical zinc finger. The interval 246–266 (EKERESGVLKSNKKSLRSRQH) is disordered. Serine 251 is modified (phosphoserine). The segment covering 256-266 (SNKKSLRSRQH) has biased composition (basic residues).

Belongs to the NSE1 family. Component of the SMC5-SMC6 complex which consists at least of SMC5, SMC6, NSMCE2, NSMCE1, NSMCE4A or EID3 and NSMCE3. NSMCE1, NSMCE4A or EID3 and NSMCE3 probably form a subcomplex that bridges the head domains of the SMC5-SMC6 heterodimer. Interacts with NSMCE3. Interacts with MAGEF1. In terms of processing, ubiquitinated.

The protein localises to the nucleus. Its subcellular location is the chromosome. It is found in the telomere. The catalysed reaction is S-ubiquitinyl-[E2 ubiquitin-conjugating enzyme]-L-cysteine + [acceptor protein]-L-lysine = [E2 ubiquitin-conjugating enzyme]-L-cysteine + N(6)-ubiquitinyl-[acceptor protein]-L-lysine.. RING-type zinc finger-containing E3 ubiquitin ligase that assembles with melanoma antigen protein (MAGE) to catalyze the direct transfer of ubiquitin from E2 ubiquitin-conjugating enzyme to a specific substrate. Within MAGE-RING ubiquitin ligase complex, MAGE stimulates and specifies ubiquitin ligase activity likely through recruitment and/or stabilization of the E2 ubiquitin-conjugating enzyme at the E3:substrate complex. Involved in maintenance of genome integrity, DNA damage response and DNA repair. NSMCE3/MAGEG1 and NSMCE1 ubiquitin ligase are components of SMC5-SMC6 complex and may positively regulate homologous recombination-mediated DNA repair. MAGEF1-NSMCE1 ubiquitin ligase promotes proteasomal degradation of MMS19, a key component of the cytosolic iron-sulfur protein assembly (CIA) machinery. Down-regulation of MMS19 impairs the activity of several DNA repair and metabolism enzymes such as ERCC2/XPD, FANCJ, RTEL1 and POLD1 that require iron-sulfur clusters as cofactors. This Homo sapiens (Human) protein is Non-structural maintenance of chromosomes element 1 homolog.